A 352-amino-acid chain; its full sequence is CRISPR-associated endonuclease Cas1 1 (352 aa).

Residues Glu-207, His-274, and Glu-289 each contribute to the Mn(2+) site.

The protein belongs to the CRISPR-associated endonuclease Cas1 family. In terms of assembly, homodimer, forms a heterotetramer with a Cas2 homodimer. Requires Mg(2+) as cofactor. Mn(2+) is required as a cofactor.

CRISPR (clustered regularly interspaced short palindromic repeat), is an adaptive immune system that provides protection against mobile genetic elements (viruses, transposable elements and conjugative plasmids). CRISPR clusters contain spacers, sequences complementary to antecedent mobile elements, and target invading nucleic acids. CRISPR clusters are transcribed and processed into CRISPR RNA (crRNA). Acts as a dsDNA endonuclease. Involved in the integration of spacer DNA into the CRISPR cassette. This is CRISPR-associated endonuclease Cas1 1 from Saccharolobus solfataricus (strain ATCC 35092 / DSM 1617 / JCM 11322 / P2) (Sulfolobus solfataricus).